The following is a 119-amino-acid chain: Large ribosomal subunit protein bL20 (119 aa).

This sequence belongs to the bacterial ribosomal protein bL20 family.

Binds directly to 23S ribosomal RNA and is necessary for the in vitro assembly process of the 50S ribosomal subunit. It is not involved in the protein synthesizing functions of that subunit. This Lactococcus lactis subsp. cremoris (strain MG1363) protein is Large ribosomal subunit protein bL20.